Here is a 143-residue protein sequence, read N- to C-terminus: Nucleoside diphosphate kinase (143 aa).

The NDPK-like domain maps to 1–132 (MVKPDGVQRG…LWFSPQELCQ (132 aa)). K3, F51, R79, T85, R96, V103, and N106 together coordinate ADP. ATP is bound by residues K3, F51, R79, T85, and R96. N106 is an ATP binding site. The active-site Pros-phosphohistidine intermediate is the H109.

It belongs to the NDK family. In terms of assembly, homohexamer. Requires Mg(2+) as cofactor.

It catalyses the reaction a 2'-deoxyribonucleoside 5'-diphosphate + ATP = a 2'-deoxyribonucleoside 5'-triphosphate + ADP. It carries out the reaction a ribonucleoside 5'-diphosphate + ATP = a ribonucleoside 5'-triphosphate + ADP. The catalysed reaction is GDP + ATP = GTP + ADP. It participates in purine metabolism; purine nucleotide biosynthesis. Major role in the synthesis of nucleoside triphosphates other than ATP. The ATP gamma phosphate is transferred to the NDP beta phosphate via a ping-pong mechanism, using a phosphorylated active-site intermediate. The chain is Nucleoside diphosphate kinase from Schistosoma mansoni (Blood fluke).